We begin with the raw amino-acid sequence, 473 residues long: Glutamate--tRNA ligase 1 (473 aa).

The 'HIGH' region motif lies at 10-20 (PSPTGFLHIGG). A 'KMSKS' region motif is present at residues 252 to 256 (KLSKR). Lys-255 provides a ligand contact to ATP.

This sequence belongs to the class-I aminoacyl-tRNA synthetase family. Glutamate--tRNA ligase type 1 subfamily. As to quaternary structure, monomer.

The protein localises to the cytoplasm. The catalysed reaction is tRNA(Glu) + L-glutamate + ATP = L-glutamyl-tRNA(Glu) + AMP + diphosphate. Catalyzes the attachment of glutamate to tRNA(Glu) in a two-step reaction: glutamate is first activated by ATP to form Glu-AMP and then transferred to the acceptor end of tRNA(Glu). This Wolbachia pipientis wMel protein is Glutamate--tRNA ligase 1.